The chain runs to 298 residues: Cytosolic Fe-S cluster assembly factor CFD1 (298 aa).

25–32 (GKGGVGKS) lines the ATP pocket. Positions 215 and 218 each coordinate [4Fe-4S] cluster.

This sequence belongs to the Mrp/NBP35 ATP-binding proteins family. NUBP2/CFD1 subfamily. As to quaternary structure, heterotetramer of 2 NBP35 and 2 CFD1 chains. Requires [4Fe-4S] cluster as cofactor.

The protein localises to the cytoplasm. Functionally, component of the cytosolic iron-sulfur (Fe/S) protein assembly (CIA) machinery. Required for maturation of extramitochondrial Fe-S proteins. The NBP35-CFD1 heterotetramer forms a Fe-S scaffold complex, mediating the de novo assembly of an Fe-S cluster and its transfer to target apoproteins. Required for biogenesis and export of both ribosomal subunits, which may reflect a role in assembly of the Fe/S clusters in RLI1, a protein which performs rRNA processing and ribosome export. In Debaryomyces hansenii (strain ATCC 36239 / CBS 767 / BCRC 21394 / JCM 1990 / NBRC 0083 / IGC 2968) (Yeast), this protein is Cytosolic Fe-S cluster assembly factor CFD1.